We begin with the raw amino-acid sequence, 66 residues long: Large ribosomal subunit protein uL29 (66 aa).

This sequence belongs to the universal ribosomal protein uL29 family.

The sequence is that of Large ribosomal subunit protein uL29 from Francisella tularensis subsp. holarctica (strain LVS).